The sequence spans 236 residues: Purine nucleoside phosphorylase DeoD-type (236 aa).

His-5 serves as a coordination point for a purine D-ribonucleoside. Phosphate is bound by residues Gly-21, Arg-25, Arg-44, and 88-91 (RIGS). Residues 180-182 (EME) and 204-205 (SD) each bind a purine D-ribonucleoside. The active-site Proton donor is the Asp-205.

This sequence belongs to the PNP/UDP phosphorylase family. As to quaternary structure, homohexamer; trimer of homodimers.

It catalyses the reaction a purine D-ribonucleoside + phosphate = a purine nucleobase + alpha-D-ribose 1-phosphate. The enzyme catalyses a purine 2'-deoxy-D-ribonucleoside + phosphate = a purine nucleobase + 2-deoxy-alpha-D-ribose 1-phosphate. Catalyzes the reversible phosphorolytic breakdown of the N-glycosidic bond in the beta-(deoxy)ribonucleoside molecules, with the formation of the corresponding free purine bases and pentose-1-phosphate. In Tolumonas auensis (strain DSM 9187 / NBRC 110442 / TA 4), this protein is Purine nucleoside phosphorylase DeoD-type.